Reading from the N-terminus, the 288-residue chain is NADPH-dependent aldehyde reductase 1, chloroplastic (288 aa).

A compositionally biased stretch (basic and acidic residues) spans 1-18; sequence MASEKQKQHAQPGKEHVM. Positions 1–32 are disordered; sequence MASEKQKQHAQPGKEHVMESSPQFSSSDYQPS. The span at 20 to 32 shows a compositional bias: polar residues; sequence SSPQFSSSDYQPS. 47–71 serves as a coordination point for NADP(+); it reads SGIGRAVGYCFASEGATVAFTYVKG. Ser-179 serves as a coordination point for substrate. Residue Tyr-192 is the Proton acceptor of the active site.

The protein belongs to the short-chain dehydrogenases/reductases (SDR) family.

It is found in the plastid. It localises to the chloroplast. Functionally, aldehyde reductase that catalyzes the reduction of the aldehyde carbonyl groups on saturated and alpha,beta-unsaturated aldehydes with more than 5 carbons. No activity on alpha,beta-unsaturated ketones. Can use propionaldehyde, butyraldehyde, methylglyoxal, (e)-2-pentenal, (E)-2-hexenal, (Z)-3-hexenal and (E)-2-nonenal as substrates, but not propenal (acrolein), crotonaldehyde, 2-butanone, 3-buten-2-one or 1-penten-3-one. May act as a short alcohol-polyol-sugar dehydrogenase possibly related to carbohydrate metabolism and the acquisition of desiccation tolerance. May also be involved in signal transduction. The chain is NADPH-dependent aldehyde reductase 1, chloroplastic from Arabidopsis thaliana (Mouse-ear cress).